A 153-amino-acid polypeptide reads, in one-letter code: Ribosomal RNA large subunit methyltransferase H (153 aa).

Residues L71 and G102 each coordinate S-adenosyl-L-methionine.

This sequence belongs to the RNA methyltransferase RlmH family. As to quaternary structure, homodimer.

Its subcellular location is the cytoplasm. It catalyses the reaction pseudouridine(1915) in 23S rRNA + S-adenosyl-L-methionine = N(3)-methylpseudouridine(1915) in 23S rRNA + S-adenosyl-L-homocysteine + H(+). Functionally, specifically methylates the pseudouridine at position 1915 (m3Psi1915) in 23S rRNA. This chain is Ribosomal RNA large subunit methyltransferase H, found in Anaeromyxobacter sp. (strain K).